A 172-amino-acid polypeptide reads, in one-letter code: Protein GrpE (172 aa).

The span at 1-11 (MSEENNSQNSN) shows a compositional bias: low complexity. A disordered region spans residues 1–22 (MSEENNSQNSNPPNPENGEIAS).

The protein belongs to the GrpE family. Homodimer.

It localises to the cytoplasm. Participates actively in the response to hyperosmotic and heat shock by preventing the aggregation of stress-denatured proteins, in association with DnaK and GrpE. It is the nucleotide exchange factor for DnaK and may function as a thermosensor. Unfolded proteins bind initially to DnaJ; upon interaction with the DnaJ-bound protein, DnaK hydrolyzes its bound ATP, resulting in the formation of a stable complex. GrpE releases ADP from DnaK; ATP binding to DnaK triggers the release of the substrate protein, thus completing the reaction cycle. Several rounds of ATP-dependent interactions between DnaJ, DnaK and GrpE are required for fully efficient folding. This chain is Protein GrpE, found in Bdellovibrio bacteriovorus (strain ATCC 15356 / DSM 50701 / NCIMB 9529 / HD100).